The chain runs to 335 residues: Aliphatic sulfonates import ATP-binding protein SsuB (335 aa).

Positions 29 to 61 are disordered; that stretch reads DGDAQDAAVYERDGGAHAPPFASGGAPPDGDRA. Residues 74–293 form the ABC transporter domain; it reads VRLTRVSKRY…ARASAAFAAL (220 aa). ATP is bound at residue 106 to 113; the sequence is GRSGCGKS. Residues 308-335 are disordered; it reads APAAPNAAGPEGASRGRAAPASGLRWAV.

The protein belongs to the ABC transporter superfamily. Aliphatic sulfonates importer (TC 3.A.1.17.2) family. In terms of assembly, the complex is composed of two ATP-binding proteins (SsuB), two transmembrane proteins (SsuC) and a solute-binding protein (SsuA).

The protein resides in the cell inner membrane. It catalyses the reaction ATP + H2O + aliphatic sulfonate-[sulfonate-binding protein]Side 1 = ADP + phosphate + aliphatic sulfonateSide 2 + [sulfonate-binding protein]Side 1.. Part of the ABC transporter complex SsuABC involved in aliphatic sulfonates import. Responsible for energy coupling to the transport system. The sequence is that of Aliphatic sulfonates import ATP-binding protein SsuB from Burkholderia pseudomallei (strain 1710b).